The primary structure comprises 184 residues: Guanylate kinase (184 aa).

Residues asparagine 5–lysine 183 form the Guanylate kinase-like domain. Residue glycine 12 to glycine 19 participates in ATP binding.

It belongs to the guanylate kinase family.

Its subcellular location is the cytoplasm. The enzyme catalyses GMP + ATP = GDP + ADP. Its function is as follows. Essential for recycling GMP and indirectly, cGMP. The sequence is that of Guanylate kinase from Prochlorococcus marinus (strain SARG / CCMP1375 / SS120).